Consider the following 170-residue polypeptide: Large ribosomal subunit protein uL11 (170 aa).

The protein belongs to the universal ribosomal protein uL11 family. In terms of assembly, part of the ribosomal stalk of the 50S ribosomal subunit. Interacts with L10 and the large rRNA to form the base of the stalk. L10 forms an elongated spine to which L12 dimers bind in a sequential fashion forming a multimeric L10(L12)X complex.

In terms of biological role, forms part of the ribosomal stalk which helps the ribosome interact with GTP-bound translation factors. The chain is Large ribosomal subunit protein uL11 from Saccharolobus islandicus (strain M.16.27) (Sulfolobus islandicus).